Reading from the N-terminus, the 217-residue chain is Probable transaldolase (217 aa).

K83 acts as the Schiff-base intermediate with substrate in catalysis.

It belongs to the transaldolase family. Type 3B subfamily.

It localises to the cytoplasm. It catalyses the reaction D-sedoheptulose 7-phosphate + D-glyceraldehyde 3-phosphate = D-erythrose 4-phosphate + beta-D-fructose 6-phosphate. It functions in the pathway carbohydrate degradation; pentose phosphate pathway; D-glyceraldehyde 3-phosphate and beta-D-fructose 6-phosphate from D-ribose 5-phosphate and D-xylulose 5-phosphate (non-oxidative stage): step 2/3. Functionally, transaldolase is important for the balance of metabolites in the pentose-phosphate pathway. In Paracoccus denitrificans (strain Pd 1222), this protein is Probable transaldolase.